The primary structure comprises 531 residues: T-complex protein 1 subunit zeta (531 aa).

Residue Ala2 is modified to N-acetylalanine. Lys5 carries the N6-acetyllysine modification. Gly39 is an ADP binding site. Residue Gly39 participates in ATP binding. Asp90 is a Mg(2+) binding site. Residues Gly91, Thr92, Thr93, Ser94, Thr158, and Lys159 each coordinate ADP. Gly91, Thr92, and Thr93 together coordinate ATP. At Lys199 the chain carries N6-acetyllysine. Ser205 carries the post-translational modification Phosphoserine. Lys251 participates in a covalent cross-link: Glycyl lysine isopeptide (Lys-Gly) (interchain with G-Cter in SUMO2). Lys287, Lys365, Lys377, and Lys388 each carry N6-acetyllysine. ADP is bound at residue Ala411. 4 residues coordinate ATP: Ala411, Gly412, Asp496, and Lys501. Residue Asp496 participates in ADP binding.

It belongs to the TCP-1 chaperonin family. Component of the chaperonin-containing T-complex (TRiC), a hexadecamer composed of two identical back-to-back stacked rings enclosing a protein folding chamber. Each ring is made up of eight different subunits: TCP1/CCT1, CCT2, CCT3, CCT4, CCT5, CCT6A/CCT6, CCT7, CCT8. Interacts with PACRG.

The protein localises to the cytoplasm. The enzyme catalyses ATP + H2O = ADP + phosphate + H(+). Component of the chaperonin-containing T-complex (TRiC), a molecular chaperone complex that assists the folding of actin, tubulin and other proteins upon ATP hydrolysis. The TRiC complex mediates the folding of WRAP53/TCAB1, thereby regulating telomere maintenance. This is T-complex protein 1 subunit zeta (CCT6) from Pongo abelii (Sumatran orangutan).